The following is a 900-amino-acid chain: Iodate reductase subunit IdrA (900 aa).

A disordered region spans residues 1-21; that stretch reads MSENIKQGGAGTFMQAPQDSV. [3Fe-4S] cluster is bound by residues Cys-35, Cys-38, and Cys-42.

The protein belongs to the prokaryotic molybdopterin-containing oxidoreductase family. In terms of assembly, the iodate reductase (Idr) complex is composed of a molybdopterin-dependent iodate reductase (IdrA and IdrB subunits) and two associated peroxidases (IdrP1 and IdrP2). The cofactor is [3Fe-4S] cluster. It depends on Mo-bis(molybdopterin guanine dinucleotide) as a cofactor.

The protein resides in the periplasm. Functionally, involved in iodate respiration. May accept electrons from cytochrome c551, and catalyze the reduction of iodate (IO(3)(-)) to produce the chemically unstable intermediate hypoiodous acid (HIO). This intermediate then undergoes abiotic disproportionation to yield two molecules of iodide (I(-)) and one molecule of iodate. The resultant iodate subsequently cycles back into the reductive pathway. The initial reduction of iodate may inadvertently produce low levels of incidental toxic H(2)O(2), which is detoxified by IdrP1 and IdrP2. In Denitromonas iodatirespirans, this protein is Iodate reductase subunit IdrA.